The sequence spans 189 residues: UPF0301 protein bbp_491 (189 aa).

It belongs to the UPF0301 (AlgH) family.

This chain is UPF0301 protein bbp_491, found in Buchnera aphidicola subsp. Baizongia pistaciae (strain Bp).